We begin with the raw amino-acid sequence, 237 residues long: tRNA (guanine-N(1)-)-methyltransferase (237 aa).

Residues G112 and 132–137 (IGDFVL) each bind S-adenosyl-L-methionine.

This sequence belongs to the RNA methyltransferase TrmD family. In terms of assembly, homodimer.

The protein localises to the cytoplasm. It catalyses the reaction guanosine(37) in tRNA + S-adenosyl-L-methionine = N(1)-methylguanosine(37) in tRNA + S-adenosyl-L-homocysteine + H(+). In terms of biological role, specifically methylates guanosine-37 in various tRNAs. The chain is tRNA (guanine-N(1)-)-methyltransferase from Thermosynechococcus vestitus (strain NIES-2133 / IAM M-273 / BP-1).